The primary structure comprises 240 residues: MGSKQPYLNGAYYGPSIPPPPKAHRSYNSPGFGCCCFSCLGSCLRCCGCCILSLICNILIAVAVILGVAALILWLIFRPNAVKFYVADANLNRFSFDPNNNLHYSLDLNFTIRNPNQRVGVYYDEFSVSGYYGDQRFGSANVSSFYQGHKNTTVILTKIEGQNLVVLGDGARTDLKDDEKSGIYRINAKLRLSVRFKFWFIKSWKLKPKIKCDDLKIPLGSSNSTGGFKFQPVQCDFDLS.

A helical transmembrane segment spans residues N57–F77. N-linked (GlcNAc...) asparagine glycans are attached at residues N109, N141, N151, and N223.

As to expression, expressed at low levels in roots, rosette leaves, cauline leaves, stems, flowers and siliques.

Its subcellular location is the cell membrane. In terms of biological role, may play a role in plant immunity. In Arabidopsis thaliana (Mouse-ear cress), this protein is NDR1/HIN1-like protein 2.